The following is a 253-amino-acid chain: Ribonuclease HII (253 aa).

In terms of domain architecture, RNase H type-2 spans 70-253; the sequence is PLVAGIDEVG…RSFSPVQNAL (184 aa). 3 residues coordinate a divalent metal cation: D76, E77, and D168.

The protein belongs to the RNase HII family. It depends on Mn(2+) as a cofactor. Mg(2+) is required as a cofactor.

It localises to the cytoplasm. The enzyme catalyses Endonucleolytic cleavage to 5'-phosphomonoester.. Endonuclease that specifically degrades the RNA of RNA-DNA hybrids. The chain is Ribonuclease HII from Latilactobacillus sakei subsp. sakei (strain 23K) (Lactobacillus sakei subsp. sakei).